The chain runs to 142 residues: Peptide methionine sulfoxide reductase MsrB (142 aa).

In terms of domain architecture, MsrB spans 2-125 (IKKNKNDLNE…NSAAVQFIPY (124 aa)). The active-site Nucleophile is C114.

This sequence belongs to the MsrB Met sulfoxide reductase family.

It catalyses the reaction L-methionyl-[protein] + [thioredoxin]-disulfide + H2O = L-methionyl-(R)-S-oxide-[protein] + [thioredoxin]-dithiol. This is Peptide methionine sulfoxide reductase MsrB from Staphylococcus saprophyticus subsp. saprophyticus (strain ATCC 15305 / DSM 20229 / NCIMB 8711 / NCTC 7292 / S-41).